Reading from the N-terminus, the 213-residue chain is uncharacterized protein (213 aa).

Positions 53, 74, and 97 each coordinate S-adenosyl-L-methionine.

The protein belongs to the methyltransferase superfamily. YrrT family.

Could be a S-adenosyl-L-methionine-dependent methyltransferase. This is an uncharacterized protein from Bacillus velezensis (strain DSM 23117 / BGSC 10A6 / LMG 26770 / FZB42) (Bacillus amyloliquefaciens subsp. plantarum).